The sequence spans 348 residues: MTFSAVQSEIRPVQWNGHTCVLIDQTVLPGIYRTIEIRTSDQMATAIRTMIVRGAPAIGVAAAFGMVLGWQEAPQGDPITHLERVAATLRATRPTAVNLFWAIDRMLTVARRDPSFARLEREATAILEGDIATCRAIGEHGLLALPAAPERLRLLTHCNAGALATAGYGTALGVVRSAHRADRLERVYADETRPRLQGARLTAWELVHERIPVTVLADTMAAHVIGRGLVDAVVVGADRIAANGDTANKIGTCGVAIIARHYGVPFFVAAPWSTVDLNLSSGEQIPIEQRDSEEMRAIEGVALCPQGVEFYNPAFDVTPASLVTGIIVESGVYAPGELAAAGQVRLGR.

Substrate-binding positions include 53 to 55, Arg93, and Gln197; that span reads RGA. Catalysis depends on Asp238, which acts as the Proton donor. Substrate is bound at residue 248–249; that stretch reads NK.

The protein belongs to the eIF-2B alpha/beta/delta subunits family. MtnA subfamily.

It carries out the reaction 5-(methylsulfanyl)-alpha-D-ribose 1-phosphate = 5-(methylsulfanyl)-D-ribulose 1-phosphate. It participates in amino-acid biosynthesis; L-methionine biosynthesis via salvage pathway; L-methionine from S-methyl-5-thio-alpha-D-ribose 1-phosphate: step 1/6. Its function is as follows. Catalyzes the interconversion of methylthioribose-1-phosphate (MTR-1-P) into methylthioribulose-1-phosphate (MTRu-1-P). This chain is Methylthioribose-1-phosphate isomerase, found in Gloeobacter violaceus (strain ATCC 29082 / PCC 7421).